We begin with the raw amino-acid sequence, 765 residues long: Dipeptidyl peptidase 4 (765 aa).

Residues 1-6 lie on the Cytoplasmic side of the membrane; it reads MKTPWK. A helical; Signal-anchor for type II membrane protein transmembrane segment spans residues 7–29; it reads VLLGLLGLAALITIITVPVVLLN. Topologically, residues 30-765 are extracellular; the sequence is KGNDAAADSR…HFIKQCFSLP (736 aa). 9 N-linked (GlcNAc...) asparagine glycosylation sites follow: Asn-84, Asn-91, Asn-149, Asn-178, Asn-228, Asn-280, Asn-320, Asn-330, and Asn-331. 3 cysteine pairs are disulfide-bonded: Cys-384/Cys-393, Cys-443/Cys-446, and Cys-453/Cys-471. Residue Asn-519 is glycosylated (N-linked (GlcNAc...) asparagine). The active-site Charge relay system is the Ser-629. A disulfide bridge connects residues Cys-648 and Cys-761. The N-linked (GlcNAc...) asparagine glycan is linked to Asn-684. Residues Asp-707 and His-739 each act as charge relay system in the active site.

This sequence belongs to the peptidase S9B family. DPPIV subfamily. Monomer. Homodimer. Heterodimer with Seprase (FAP). Requires homodimerization for optimal dipeptidyl peptidase activity and T-cell costimulation. Found in a membrane raft complex, at least composed of BCL10, CARD11, DPP4 and IKBKB. Associates with collagen. Interacts with PTPRC; the interaction is enhanced in an interleukin-12-dependent manner in activated lymphocytes. Interacts (extracellular domain) with ADA; does not inhibit its dipeptidyl peptidase activity. Interacts with CAV1 (via the N-terminus); the interaction is direct. Interacts (via cytoplasmic tail) with CARD11 (via PDZ domain); its homodimerization is necessary for interaction with CARD11. Interacts with IGF2R; the interaction is direct. Interacts with GPC3. In terms of processing, the soluble form (Dipeptidyl peptidase 4 soluble form also named SDPP) derives from the membrane form (Dipeptidyl peptidase 4 membrane form also named MDPP) by proteolytic processing. Post-translationally, N- and O-Glycosylated. Phosphorylated. Mannose 6-phosphate residues in the carbohydrate moiety are necessary for interaction with IGF2R in activated T-cells. Mannose 6-phosphorylation is induced during T-cell activation.

The protein resides in the secreted. It localises to the cell membrane. It is found in the apical cell membrane. The protein localises to the cell projection. Its subcellular location is the invadopodium membrane. The protein resides in the lamellipodium membrane. It localises to the cell junction. It is found in the membrane raft. The catalysed reaction is Release of an N-terminal dipeptide, Xaa-Yaa-|-Zaa-, from a polypeptide, preferentially when Yaa is Pro, provided Zaa is neither Pro nor hydroxyproline.. Inhibited by GPC3 and diprotin A. In terms of biological role, cell surface glycoprotein receptor involved in the costimulatory signal essential for T-cell receptor (TCR)-mediated T-cell activation. Acts as a positive regulator of T-cell coactivation, by binding at least ADA, CAV1, IGF2R, and PTPRC. Its binding to CAV1 and CARD11 induces T-cell proliferation and NF-kappa-B activation in a T-cell receptor/CD3-dependent manner. Its interaction with ADA also regulates lymphocyte-epithelial cell adhesion. In association with FAP is involved in the pericellular proteolysis of the extracellular matrix (ECM), the migration and invasion of endothelial cells into the ECM. May be involved in the promotion of lymphatic endothelial cells adhesion, migration and tube formation. When overexpressed, enhanced cell proliferation, a process inhibited by GPC3. Also acts as a serine exopeptidase with a dipeptidyl peptidase activity that regulates various physiological processes by cleaving peptides in the circulation, including many chemokines, mitogenic growth factors, neuropeptides and peptide hormones. Removes N-terminal dipeptides sequentially from polypeptides having unsubstituted N-termini provided that the penultimate residue is proline. The polypeptide is Dipeptidyl peptidase 4 (DPP4) (Felis catus (Cat)).